Here is a 561-residue protein sequence, read N- to C-terminus: 2-succinyl-5-enolpyruvyl-6-hydroxy-3-cyclohexene-1-carboxylate synthase (561 aa).

It belongs to the TPP enzyme family. MenD subfamily. Homodimer. Mg(2+) serves as cofactor. The cofactor is Mn(2+). It depends on thiamine diphosphate as a cofactor.

The catalysed reaction is isochorismate + 2-oxoglutarate + H(+) = 5-enolpyruvoyl-6-hydroxy-2-succinyl-cyclohex-3-ene-1-carboxylate + CO2. The protein operates within quinol/quinone metabolism; 1,4-dihydroxy-2-naphthoate biosynthesis; 1,4-dihydroxy-2-naphthoate from chorismate: step 2/7. It participates in cofactor biosynthesis; phylloquinone biosynthesis. Its function is as follows. Catalyzes the thiamine diphosphate-dependent decarboxylation of 2-oxoglutarate and the subsequent addition of the resulting succinic semialdehyde-thiamine pyrophosphate anion to isochorismate to yield 2-succinyl-5-enolpyruvyl-6-hydroxy-3-cyclohexene-1-carboxylate (SEPHCHC). This is 2-succinyl-5-enolpyruvyl-6-hydroxy-3-cyclohexene-1-carboxylate synthase from Synechococcus sp. (strain CC9605).